Reading from the N-terminus, the 794-residue chain is E3 ubiquitin-protein ligase wwp-1 (794 aa).

Positions 1–16 (MARNEPSSQQPSSSGS) are enriched in low complexity. Disordered regions lie at residues 1 to 31 (MARNEPSSQQPSSSGSNGTPAQQNGSAKPSK) and 155 to 198 (RSAG…AAPT). The C2 domain occupies 10–124 (QPSSSGSNGT…TRNENGEFKN (115 aa)). Over residues 17–27 (NGTPAQQNGSA) the composition is skewed to polar residues. Residues 161 to 186 (AETAASASSEASTSNGVATSSSARRP) are compositionally biased toward low complexity. WW domains follow at residues 219–252 (EQLPDGWEMRFDQYGRKYYVDHTTKSTTWERPST), 253–286 (QPLPQGWEMRRDPRGRVYYVDHNTRTTTWQRPTA), 324–358 (GPLPEGWEKRQDPNTSRMYFVNHVNRTTQWEDPRT), and 366–399 (QPLPDGWEMRFTEQGVPFFIDHQSKTTTYNDPRT). An HECT domain is found at 460-794 (NAVDLRRRLY…IEMTEGFGNE (335 aa)). The Glycyl thioester intermediate role is filled by C762.

As to quaternary structure, interacts (via WW domains) with Kruppel-like factor klf-1. Interacts with ubiquitin-conjugating enzyme E2 ubc-18. As to expression, expressed in neurons localized in the head and tail of adults.

It catalyses the reaction S-ubiquitinyl-[E2 ubiquitin-conjugating enzyme]-L-cysteine + [acceptor protein]-L-lysine = [E2 ubiquitin-conjugating enzyme]-L-cysteine + N(6)-ubiquitinyl-[acceptor protein]-L-lysine.. It participates in protein modification; protein ubiquitination. Functionally, E3 ubiquitin-protein ligase which accepts ubiquitin from an E2 ubiquitin-conjugating enzyme in the form of a thioester and then directly transfers the ubiquitin to targeted substrates. Ubiquitinates klf-1. Required for diet restriction-mediated lifespan extension, acting in concert with Kruppel-like factor klf-1 in the intestine to perhaps modulate genes involved in lipid metabolism. Probably acting downstream of the Insulin/IGF-1-like signaling (IIS) mediated pathway, plays a role in the immune response to infection by the Gram-negative bacterium P.aeruginosa, at least partly in response to bacterial pore-forming toxins. The sequence is that of E3 ubiquitin-protein ligase wwp-1 from Caenorhabditis elegans.